The sequence spans 362 residues: Cytoskeleton protein RodZ (362 aa).

The Cytoplasmic segment spans residues Met-1–Gly-111. The HTH cro/C1-type domain maps to Leu-19–Leu-79. The segment at residues Gln-30 to Glu-49 is a DNA-binding region (H-T-H motif). Residues Trp-112–Trp-132 form a helical; Signal-anchor for type II membrane protein membrane-spanning segment. The Periplasmic portion of the chain corresponds to Trp-133–Glu-362. The segment at Ser-151–Gly-277 is disordered. Low complexity predominate over residues Ser-193–Thr-221. The span at Val-223–His-242 shows a compositional bias: polar residues. Residues Ala-246 to Pro-259 show a composition bias toward low complexity.

This sequence belongs to the RodZ family.

It is found in the cell inner membrane. Its function is as follows. Cytoskeletal protein that is involved in cell-shape control through regulation of the length of the long axis. This is Cytoskeleton protein RodZ from Yersinia pseudotuberculosis serotype IB (strain PB1/+).